A 67-amino-acid polypeptide reads, in one-letter code: Toxin Bl-1 (67 aa).

The LCN-type CS-alpha/beta domain maps to 2–66; that stretch reads RDGYISQPEN…GIIVDGIKCH (65 aa). 4 cysteine pairs are disulfide-bonded: cysteine 12-cysteine 65, cysteine 16-cysteine 37, cysteine 23-cysteine 47, and cysteine 27-cysteine 49. At threonine 67 the chain carries Threonine amide.

The protein belongs to the long (4 C-C) scorpion toxin superfamily. Sodium channel inhibitor family. Alpha subfamily. In terms of tissue distribution, expressed by the venom gland.

It localises to the secreted. Alpha toxins bind voltage-independently at site-3 of sodium channels (Nav) and inhibit the inactivation of the activated channels, thereby blocking neuronal transmission. Is highly toxic to insects (tested on the crickets A.domesticus). This peptide may also be toxic to mammals, since it is similar to alpha-like toxins that are active on both insect and mammalian sodium channels. This Buthacus leptochelys (Egyptian fat-tailed scorpion) protein is Toxin Bl-1.